The chain runs to 539 residues: GMP synthase [glutamine-hydrolyzing] (539 aa).

One can recognise a Glutamine amidotransferase type-1 domain in the interval 4 to 202; it reads KILILDFGSQ…VLQIAGAKPD (199 aa). The active-site Nucleophile is the Cys81. Catalysis depends on residues His176 and Glu178. The 193-residue stretch at 203 to 395 folds into the GMPS ATP-PPase domain; that stretch reads WIMKNHIEEA…LGLPPEMVYR (193 aa). 230 to 236 provides a ligand contact to ATP; it reads SGGVDSS.

In terms of assembly, homodimer.

It catalyses the reaction XMP + L-glutamine + ATP + H2O = GMP + L-glutamate + AMP + diphosphate + 2 H(+). The protein operates within purine metabolism; GMP biosynthesis; GMP from XMP (L-Gln route): step 1/1. Catalyzes the synthesis of GMP from XMP. The sequence is that of GMP synthase [glutamine-hydrolyzing] from Burkholderia orbicola (strain AU 1054).